Here is a 183-residue protein sequence, read N- to C-terminus: ATP-dependent protease subunit HslV (183 aa).

Residue T2 is part of the active site. Na(+) contacts are provided by G157, C160, and T163.

The protein belongs to the peptidase T1B family. HslV subfamily. As to quaternary structure, a double ring-shaped homohexamer of HslV is capped on each side by a ring-shaped HslU homohexamer. The assembly of the HslU/HslV complex is dependent on binding of ATP.

It localises to the cytoplasm. The catalysed reaction is ATP-dependent cleavage of peptide bonds with broad specificity.. Its activity is regulated as follows. Allosterically activated by HslU binding. Its function is as follows. Protease subunit of a proteasome-like degradation complex believed to be a general protein degrading machinery. The sequence is that of ATP-dependent protease subunit HslV from Vibrio parahaemolyticus serotype O3:K6 (strain RIMD 2210633).